Reading from the N-terminus, the 384-residue chain is 4-hydroxy-3-methylbut-2-en-1-yl diphosphate synthase (flavodoxin) (384 aa).

The [4Fe-4S] cluster site is built by Cys-280, Cys-283, Cys-315, and Glu-322.

This sequence belongs to the IspG family. [4Fe-4S] cluster is required as a cofactor.

It catalyses the reaction (2E)-4-hydroxy-3-methylbut-2-enyl diphosphate + oxidized [flavodoxin] + H2O + 2 H(+) = 2-C-methyl-D-erythritol 2,4-cyclic diphosphate + reduced [flavodoxin]. The protein operates within isoprenoid biosynthesis; isopentenyl diphosphate biosynthesis via DXP pathway; isopentenyl diphosphate from 1-deoxy-D-xylulose 5-phosphate: step 5/6. In terms of biological role, converts 2C-methyl-D-erythritol 2,4-cyclodiphosphate (ME-2,4cPP) into 1-hydroxy-2-methyl-2-(E)-butenyl 4-diphosphate. The polypeptide is 4-hydroxy-3-methylbut-2-en-1-yl diphosphate synthase (flavodoxin) (Frankia casuarinae (strain DSM 45818 / CECT 9043 / HFP020203 / CcI3)).